We begin with the raw amino-acid sequence, 278 residues long: Aquaporin NIP3-3 (278 aa).

2 consecutive transmembrane segments (helical) span residues 70 to 90 and 99 to 119; these read VSAE…TIIM and TLLG…LSLI. Positions 127-129 match the NPA 1 motif; it reads NPA. 3 helical membrane passes run 141 to 163, 185 to 205, and 213 to 233; these read PSAH…SFAV, AFFV…ALAT, and LIAV…GPST. Residues 238-240 carry the NPA 2 motif; sequence NPA. Residues 255–275 form a helical membrane-spanning segment; that stretch reads IWVYLVATPLGAIAGTGAYVA.

Belongs to the MIP/aquaporin (TC 1.A.8) family. NIP (TC 1.A.8.12) subfamily. As to expression, expressed in leaves and at lower levels in roots and anthers.

The protein resides in the membrane. Its function is as follows. Aquaporins facilitate the transport of water and small neutral solutes across cell membranes. The chain is Aquaporin NIP3-3 (NIP3-3) from Oryza sativa subsp. japonica (Rice).